A 256-amino-acid chain; its full sequence is Calsenilin (256 aa).

The tract at residues 1-20 (MQPAKEVTKASDGSLLGDLG) is disordered. Ser14 carries the phosphoserine modification. Lys26 participates in a covalent cross-link: Glycyl lysine isopeptide (Lys-Gly) (interchain with G-Cter in SUMO1). S-palmitoyl cysteine attachment occurs at residues Cys45 and Cys46. Residue Ser60 is modified to Phosphoserine. Ser63 is subject to Phosphoserine; by CK1. Residues 67–123 (LELSTVRHQPEGLDQLQAQTKFTKKELQSLYRGFKNECPTGLVDEDTFKLIYAQFFP) form the EF-hand 1; degenerate domain. Residue Lys90 forms a Glycyl lysine isopeptide (Lys-Gly) (interchain with G-Cter in SUMO1) linkage. 3 consecutive EF-hand domains span residues 126–161 (DATTYAHFLFNAFDADGNGAIHFEDFVVGLSILLRG), 162–197 (TVHEKLKWAFNLYDINKDGYITKEEMLAIMKSIYDM), and 210–245 (APAEHVERFFEKMDRNQDGVVTIEEFLEACQKDENI). The Ca(2+) site is built by Asp175, Asn177, Asp179, Tyr181, Glu186, Asp223, Asn225, Asp227, and Glu234. An interaction with KCND2 region spans residues 243–256 (ENIMSSMQLFENVI).

Belongs to the recoverin family. As to quaternary structure, binds to DNA as a homomultimer. Dimerization is induced by binding to calcium. Interacts with the C-terminus of PSEN1 and PSEN2 and with PSEN2 CTF subunit. Associates with KCN1. Component of heteromultimeric potassium channels. Identified in potassium channel complexes containing KCND1, KCND2, KCND3, KCNIP1, KCNIP2, KCNIP3, KCNIP4, DPP6 and DPP10. Interacts with KCND2 and KCND3. Post-translationally, palmitoylated. Palmitoylation enhances association with the plasma membrane. In terms of processing, proteolytically cleaved by caspase-3. Phosphorylation at Ser-63 inhibits cleavage by CASP3. In terms of tissue distribution, highly expressed in brain. Widely expressed at lower levels. Expression levels are elevated in brain cortex regions affected by Alzheimer disease.

The protein localises to the cytoplasm. It localises to the cell membrane. Its subcellular location is the endoplasmic reticulum. The protein resides in the golgi apparatus. It is found in the nucleus. Calcium-dependent transcriptional repressor that binds to the DRE element of genes including PDYN and FOS. Affinity for DNA is reduced upon binding to calcium and enhanced by binding to magnesium. Seems to be involved in nociception. In terms of biological role, regulatory subunit of Kv4/D (Shal)-type voltage-gated rapidly inactivating A-type potassium channels, such as KCND2/Kv4.2 and KCND3/Kv4.3. Modulates channel expression at the cell membrane, gating characteristics, inactivation kinetics and rate of recovery from inactivation in a calcium-dependent and isoform-specific manner. Functionally, may play a role in the regulation of PSEN2 proteolytic processing and apoptosis. Together with PSEN2 involved in modulation of amyloid-beta formation. This chain is Calsenilin (KCNIP3), found in Homo sapiens (Human).